The following is a 297-amino-acid chain: MAAPQLFRALVSAQWVAEALKAPRSSQPLKLLDASWYLPKLGRDARREFEERHIPGAAFFDIDRCSDHTSPYDHMLPNATHFADYAGSLGVSAATHVVIYDDSDQGLYSAPRVWWMFRAFGHHSVSLLDGGFRHWLNQNLPISSGKSHSEPAEFSAQLDPSFIKTHEDILENLDARRFQVVDARAAGRFQGTQPEPRDGIEPGHIPGSVNIPFTEFLTNEGLEKSPEEIKRLFKEKKVDLSKPLVATCGSGVTACHVVLGAFLCGKSDVPVYDGSWVEWYMRAQPEHIISEGRGKTQ.

Residue alanine 2 is modified to N-acetylalanine. The region spanning 25 to 144 is the Rhodanese 1 domain; it reads SSQPLKLLDA…WLNQNLPISS (120 aa). Serine 35 bears the Phosphoserine mark. At lysine 40 the chain carries N6-acetyllysine; alternate. Lysine 40 bears the N6-succinyllysine; alternate mark. The tract at residues 145-160 is hinge; it reads GKSHSEPAEFSAQLDP. Lysine 146 and lysine 164 each carry N6-succinyllysine. Residues 174 to 288 form the Rhodanese 2 domain; sequence DARRFQVVDA…WYMRAQPEHI (115 aa). Arginine 188 lines the substrate pocket. The active-site Cysteine persulfide intermediate is the cysteine 248.

Monomer (active form). Homodimer; disulfide-linked (inactive form). Expressed in the brain and retina. In the retina, localized to the inner and outer plexiform layer, the inner and outer nuclear layer and the outer segments of photoreceptors. In the brain, localized to neurons of mitral cell layers, glomerular, and external plexiform layers in the olfactory bulb. Also found in Purkinje cell stomata and proximal dendrites. In the spinal cord, localized to large neurons. In the cerebral cortex, localized to pyramidial neurons in layers II/III and V, and in layers I-VI of neocortical areas. In the hippocampus, found in CA1 and CA3 pyramidal cells.

It is found in the cytoplasm. It localises to the mitochondrion. Its subcellular location is the synapse. The protein localises to the synaptosome. It catalyses the reaction 2-oxo-3-sulfanylpropanoate + [thioredoxin]-dithiol = [thioredoxin]-disulfide + hydrogen sulfide + pyruvate + H(+). Its activity is regulated as follows. By oxidative stress, and thioredoxin. Under oxidative stress conditions, the catalytic cysteine site is converted to a sulfenate which inhibits the MPST enzyme activity. Reduced thioredoxin cleaves an intersubunit disulfide bond to turn on the redox switch and reactivate the enzyme. Inhibited by different oxidants, hydrogen peroxide and tetrathionate. In terms of biological role, transfer of a sulfur ion to cyanide or to other thiol compounds. Also has weak rhodanese activity. Detoxifies cyanide and is required for thiosulfate biosynthesis. Acts as an antioxidant. In combination with cysteine aminotransferase (CAT), contributes to the catabolism of cysteine and is an important producer of hydrogen sulfide in the brain, retina and vascular endothelial cells. Hydrogen sulfide H(2)S is an important synaptic modulator, signaling molecule, smooth muscle contractor and neuroprotectant. Its production by the 3MST/CAT pathway is regulated by calcium ions. The protein is 3-mercaptopyruvate sulfurtransferase (Mpst) of Mus musculus (Mouse).